The primary structure comprises 306 residues: Transcription initiation factor IIB (306 aa).

2 tandem repeats follow at residues 122–205 (NELE…LREL) and 216–297 (DYVT…ELTQ).

Belongs to the TFIIB family.

Its function is as follows. Stabilizes TBP binding to an archaeal box-A promoter. Also responsible for recruiting RNA polymerase II to the pre-initiation complex (DNA-TBP-TFIIB). The sequence is that of Transcription initiation factor IIB from Saccharolobus shibatae (strain ATCC 51178 / DSM 5389 / JCM 8931 / NBRC 15437 / B12) (Sulfolobus shibatae).